We begin with the raw amino-acid sequence, 146 residues long: Benzoylsuccinyl-CoA thiolase subunit BbsA (146 aa).

Cysteine 42, cysteine 45, cysteine 55, and cysteine 58 together coordinate Zn(2+).

It belongs to the BbsA family. Heterotetramer composed of two BbsA subunits and two BbsB subunits. Both BbsA and BbsB are essential for enzymatic activity.

The enzyme catalyses (S)-2-benzoylsuccinyl-CoA + CoA = benzoyl-CoA + succinyl-CoA. The protein operates within xenobiotic degradation; toluene degradation. In terms of biological role, component of the BbsAB thiolase complex, which catalyzes the thiolytic cleavage of (S)-2-benzoylsuccinyl-CoA to succinyl-CoA and benzoyl-CoA, the final step of anaerobic toluene metabolism. The BbsA subunit critically contributes to an induced-fit process for productive binding of a CoA substrate into the active site of BbsB. The sequence is that of Benzoylsuccinyl-CoA thiolase subunit BbsA from Geobacter metallireducens (strain ATCC 53774 / DSM 7210 / GS-15).